Consider the following 402-residue polypeptide: Probable glutamate 5-kinase (402 aa).

Residues Ser58, Asp145, and Asn157 each coordinate substrate. Residues 177 to 178 and 218 to 224 each bind ATP; these read TD and TGGMKTK. The region spanning 295–373 is the PUA domain; it reads HGSLEIDRGA…KEIASILGYN (79 aa).

This sequence belongs to the glutamate 5-kinase family.

The protein localises to the cytoplasm. It carries out the reaction L-glutamate + ATP = L-glutamyl 5-phosphate + ADP. It functions in the pathway amino-acid biosynthesis; L-proline biosynthesis; L-glutamate 5-semialdehyde from L-glutamate: step 1/2. Its function is as follows. Catalyzes the transfer of a phosphate group to glutamate to form glutamate 5-phosphate which rapidly cyclizes to 5-oxoproline. This Schizosaccharomyces pombe (strain 972 / ATCC 24843) (Fission yeast) protein is Probable glutamate 5-kinase.